The following is a 164-amino-acid chain: MGGGGPRRPGTLPLLALLALLAAHGGAAPLQPGGSPALTKIYPRGSHWAVGHLMGKKSTGDFPYAYEEENKIPLSASPENIKQLDDYLQREEMSKHLLQLLEGNENKSAHFSKGGLPWHTRNSWETDDSSSWKDVSRTRCVSAFLTVTFCSKVAYQLCPTSALS.

An N-terminal signal peptide occupies residues 1 to 27 (MGGGGPRRPGTLPLLALLALLAAHGGA). A Methionine amide modification is found at Met54. Positions 58–164 (STGDFPYAYE…YQLCPTSALS (107 aa)) are excised as a propeptide.

This sequence belongs to the bombesin/neuromedin-B/ranatensin family.

It is found in the secreted. Its subcellular location is the cytoplasmic vesicle. The protein resides in the secretory vesicle lumen. Functionally, stimulates the release of gastrin and other gastrointestinal hormones. Stimulates pancreatic protein and fluid secretion, and increases acid secretion from the avian proventriculus. The sequence is that of Gastrin-releasing peptide (GRP) from Gallus gallus (Chicken).